The sequence spans 543 residues: CTP synthase (543 aa).

Residues 1-265 (MARYIFITGG…DDEVLAAFAI (265 aa)) form an amidoligase domain region. S13 is a CTP binding site. S13 provides a ligand contact to UTP. 14 to 19 (SLGKGL) is a binding site for ATP. Y54 contacts L-glutamine. D71 is a binding site for ATP. Residues D71 and E139 each coordinate Mg(2+). CTP contacts are provided by residues 146 to 148 (DIE), 186 to 191 (KTKPTQ), and K222. UTP-binding positions include 186–191 (KTKPTQ) and K222. 238–240 (RDA) provides a ligand contact to ATP. The Glutamine amidotransferase type-1 domain occupies 291–542 (TIAIVGKYTG…IEAALVRSRL (252 aa)). An L-glutamine-binding site is contributed by G353. C380 serves as the catalytic Nucleophile; for glutamine hydrolysis. Residues 381-384 (FGMQ), E404, and R470 each bind L-glutamine. Catalysis depends on residues H515 and E517.

It belongs to the CTP synthase family. As to quaternary structure, homotetramer.

The catalysed reaction is UTP + L-glutamine + ATP + H2O = CTP + L-glutamate + ADP + phosphate + 2 H(+). It catalyses the reaction L-glutamine + H2O = L-glutamate + NH4(+). It carries out the reaction UTP + NH4(+) + ATP = CTP + ADP + phosphate + 2 H(+). Its pathway is pyrimidine metabolism; CTP biosynthesis via de novo pathway; CTP from UDP: step 2/2. Its activity is regulated as follows. Allosterically activated by GTP, when glutamine is the substrate; GTP has no effect on the reaction when ammonia is the substrate. The allosteric effector GTP functions by stabilizing the protein conformation that binds the tetrahedral intermediate(s) formed during glutamine hydrolysis. Inhibited by the product CTP, via allosteric rather than competitive inhibition. Catalyzes the ATP-dependent amination of UTP to CTP with either L-glutamine or ammonia as the source of nitrogen. Regulates intracellular CTP levels through interactions with the four ribonucleotide triphosphates. The chain is CTP synthase from Rhodopseudomonas palustris (strain BisB5).